The following is a 485-amino-acid chain: Sulfate adenylyltransferase subunit 1 (485 aa).

In terms of domain architecture, tr-type G spans 30–243; it reads KGLLRFLTCG…ELLETIDTQR (214 aa). The tract at residues 39-46 is G1; sequence GSVDDGKS. 39–46 contacts GTP; sequence GSVDDGKS. The segment at 97–101 is G2; the sequence is GITID. The interval 118–121 is G3; that stretch reads DTPG. Residues 118 to 122 and 173 to 176 each bind GTP; these read DTPGH and NKMD. The tract at residues 173-176 is G4; it reads NKMD. The interval 210–212 is G5; that stretch reads SAL.

The protein belongs to the TRAFAC class translation factor GTPase superfamily. Classic translation factor GTPase family. CysN/NodQ subfamily. As to quaternary structure, heterodimer composed of CysD, the smaller subunit, and CysN.

The catalysed reaction is sulfate + ATP + H(+) = adenosine 5'-phosphosulfate + diphosphate. It functions in the pathway sulfur metabolism; hydrogen sulfide biosynthesis; sulfite from sulfate: step 1/3. Its function is as follows. With CysD forms the ATP sulfurylase (ATPS) that catalyzes the adenylation of sulfate producing adenosine 5'-phosphosulfate (APS) and diphosphate, the first enzymatic step in sulfur assimilation pathway. APS synthesis involves the formation of a high-energy phosphoric-sulfuric acid anhydride bond driven by GTP hydrolysis by CysN coupled to ATP hydrolysis by CysD. The polypeptide is Sulfate adenylyltransferase subunit 1 (Shewanella oneidensis (strain ATCC 700550 / JCM 31522 / CIP 106686 / LMG 19005 / NCIMB 14063 / MR-1)).